Reading from the N-terminus, the 284-residue chain is Proline-rich protein 32 (284 aa).

3 disordered regions span residues 59-80 (RPPF…APRH), 97-119 (EINS…NMSQ), and 143-171 (SGNN…RGPP).

This Mus musculus (Mouse) protein is Proline-rich protein 32 (Prr32).